Consider the following 159-residue polypeptide: Neuroglobin-1 (159 aa).

In terms of domain architecture, Globin spans 3-151; the sequence is KLTEKEKELI…VVAAMSRGWA (149 aa). Heme b-binding residues include His-66 and His-98.

This sequence belongs to the globin family. In terms of assembly, monomer. Homodimers and homotetramers. Mainly monomeric but also detected as part of homodimers and homotetramers.

The protein resides in the cytoplasm. It is found in the cytosol. It localises to the mitochondrion matrix. The catalysed reaction is Fe(III)-heme b-[protein] + nitric oxide + H2O = Fe(II)-heme b-[protein] + nitrite + 2 H(+). Functionally, monomeric globin with a bis-histidyl six-coordinate heme-iron atom through which it can bind dioxygen, carbon monoxide and nitric oxide. Could help transport oxygen and increase its availability to the metabolically active neuronal tissues, though its low quantity in tissues as well as its high affinity for dioxygen, which may limit its oxygen-releasing ability, argue against it. The ferrous/deoxygenated form exhibits a nitrite reductase activity and it could produce nitric oxide which in turn inhibits cellular respiration in response to hypoxia. In its ferrous/deoxygenated state, it may also exhibit GDI (Guanine nucleotide Dissociation Inhibitor) activity toward heterotrimeric G-alpha proteins, thereby regulating signal transduction to facilitate neuroprotective responses in the wake of hypoxia and associated oxidative stress. The sequence is that of Neuroglobin-1 (ngb1) from Oncorhynchus mykiss (Rainbow trout).